A 182-amino-acid chain; its full sequence is Acireductone dioxygenase (182 aa).

4 residues coordinate Fe(2+): H100, H102, E106, and H145. Ni(2+) contacts are provided by H100, H102, E106, and H145.

It belongs to the acireductone dioxygenase (ARD) family. As to quaternary structure, monomer. Fe(2+) is required as a cofactor. It depends on Ni(2+) as a cofactor.

The enzyme catalyses 1,2-dihydroxy-5-(methylsulfanyl)pent-1-en-3-one + O2 = 3-(methylsulfanyl)propanoate + CO + formate + 2 H(+). The catalysed reaction is 1,2-dihydroxy-5-(methylsulfanyl)pent-1-en-3-one + O2 = 4-methylsulfanyl-2-oxobutanoate + formate + 2 H(+). Its pathway is amino-acid biosynthesis; L-methionine biosynthesis via salvage pathway; L-methionine from S-methyl-5-thio-alpha-D-ribose 1-phosphate: step 5/6. Catalyzes 2 different reactions between oxygen and the acireductone 1,2-dihydroxy-3-keto-5-methylthiopentene (DHK-MTPene) depending upon the metal bound in the active site. Fe-containing acireductone dioxygenase (Fe-ARD) produces formate and 2-keto-4-methylthiobutyrate (KMTB), the alpha-ketoacid precursor of methionine in the methionine recycle pathway. Ni-containing acireductone dioxygenase (Ni-ARD) produces methylthiopropionate, carbon monoxide and formate, and does not lie on the methionine recycle pathway. The chain is Acireductone dioxygenase from Trichormus variabilis (strain ATCC 29413 / PCC 7937) (Anabaena variabilis).